A 276-amino-acid chain; its full sequence is Formamidopyrimidine-DNA glycosylase (276 aa).

The active-site Schiff-base intermediate with DNA is Pro-2. The Proton donor role is filled by Glu-3. The active-site Proton donor; for beta-elimination activity is the Lys-58. Positions 94, 112, and 157 each coordinate DNA. The segment at 242–276 (FVYDRAGQPCRVCGTPIKQIVQGQRSTYYCPTCQR) adopts an FPG-type zinc-finger fold. The Proton donor; for delta-elimination activity role is filled by Arg-266.

The protein belongs to the FPG family. In terms of assembly, monomer. Zn(2+) serves as cofactor.

The catalysed reaction is Hydrolysis of DNA containing ring-opened 7-methylguanine residues, releasing 2,6-diamino-4-hydroxy-5-(N-methyl)formamidopyrimidine.. It carries out the reaction 2'-deoxyribonucleotide-(2'-deoxyribose 5'-phosphate)-2'-deoxyribonucleotide-DNA = a 3'-end 2'-deoxyribonucleotide-(2,3-dehydro-2,3-deoxyribose 5'-phosphate)-DNA + a 5'-end 5'-phospho-2'-deoxyribonucleoside-DNA + H(+). Functionally, involved in base excision repair of DNA damaged by oxidation or by mutagenic agents. Acts as a DNA glycosylase that recognizes and removes damaged bases. Has a preference for oxidized purines, such as 7,8-dihydro-8-oxoguanine (8-oxoG). Has AP (apurinic/apyrimidinic) lyase activity and introduces nicks in the DNA strand. Cleaves the DNA backbone by beta-delta elimination to generate a single-strand break at the site of the removed base with both 3'- and 5'-phosphates. In Paraburkholderia phymatum (strain DSM 17167 / CIP 108236 / LMG 21445 / STM815) (Burkholderia phymatum), this protein is Formamidopyrimidine-DNA glycosylase.